The sequence spans 359 residues: Carbamoyl phosphate synthase arginine-specific small chain (359 aa).

The tract at residues 1-168 is CPSase; the sequence is MKAYLVLATG…VETFEGNGPH (168 aa). L-glutamine contacts are provided by serine 45, glycine 216, and glycine 218. A Glutamine amidotransferase type-1 domain is found at 168-355; it reads HIVLIDYGFK…IDDVAAKGRE (188 aa). The active-site Nucleophile is the cysteine 243. Residues leucine 244, glutamine 247, asparagine 285, and tyrosine 288 each contribute to the L-glutamine site. Catalysis depends on residues histidine 328 and glutamate 330.

It belongs to the CarA family. Composed of two chains; the small (or glutamine) chain promotes the hydrolysis of glutamine to ammonia, which is used by the large (or ammonia) chain to synthesize carbamoyl phosphate. Tetramer of heterodimers (alpha,beta)4.

The enzyme catalyses hydrogencarbonate + L-glutamine + 2 ATP + H2O = carbamoyl phosphate + L-glutamate + 2 ADP + phosphate + 2 H(+). It catalyses the reaction L-glutamine + H2O = L-glutamate + NH4(+). Its pathway is amino-acid biosynthesis; L-arginine biosynthesis; carbamoyl phosphate from bicarbonate: step 1/1. Functionally, small subunit of the glutamine-dependent carbamoyl phosphate synthetase (CPSase). CPSase catalyzes the formation of carbamoyl phosphate from the ammonia moiety of glutamine, carbonate, and phosphate donated by ATP, constituting the first step of the biosynthetic pathway leading to arginine and/or urea. The small subunit (glutamine amidotransferase) binds and cleaves glutamine to supply the large subunit with the substrate ammonia. This chain is Carbamoyl phosphate synthase arginine-specific small chain, found in Halalkalibacterium halodurans (strain ATCC BAA-125 / DSM 18197 / FERM 7344 / JCM 9153 / C-125) (Bacillus halodurans).